Here is a 559-residue protein sequence, read N- to C-terminus: Poly(3-hydroxyalkanoate) polymerase 1 (559 aa).

The active site involves Cys-296.

This sequence belongs to the PHA/PHB synthase family. Type II PhaC subfamily.

It functions in the pathway biopolymer metabolism; poly-(R)-3-hydroxybutanoate biosynthesis. Functionally, synthesizes poly(3-hydroxyalkanoates) (PHA), complements a mutant of P.putida that does not make PHA. The protein is Poly(3-hydroxyalkanoate) polymerase 1 of Ectopseudomonas oleovorans (Pseudomonas oleovorans).